Consider the following 512-residue polypeptide: ATP synthase subunit alpha 2 (512 aa).

Residue 169–176 participates in ATP binding; the sequence is GDRQTGKT.

The protein belongs to the ATPase alpha/beta chains family. F-type ATPases have 2 components, CF(1) - the catalytic core - and CF(0) - the membrane proton channel. CF(1) has five subunits: alpha(3), beta(3), gamma(1), delta(1), epsilon(1). CF(0) has four main subunits: a(1), b(1), b'(1) and c(9-12).

Its subcellular location is the cell inner membrane. The enzyme catalyses ATP + H2O + 4 H(+)(in) = ADP + phosphate + 5 H(+)(out). Its function is as follows. Produces ATP from ADP in the presence of a proton gradient across the membrane. The alpha chain is a regulatory subunit. The polypeptide is ATP synthase subunit alpha 2 (Dinoroseobacter shibae (strain DSM 16493 / NCIMB 14021 / DFL 12)).